We begin with the raw amino-acid sequence, 703 residues long: Subtilisin-like protease SBT4.7 (703 aa).

The first 19 residues, 1–19 (MAKRDYFCFVVLFLSSVSA), serve as a signal peptide directing secretion. Positions 20–107 (VIDDPQNKQV…VFPNINYKLQ (88 aa)) are cleaved as a propeptide — activation peptide. Residues 29-106 (VYVVYMGSLP…SVFPNINYKL (78 aa)) form the Inhibitor I9 domain. Positions 111–556 (SWDFLGLKEG…AGHVDQIAAI (446 aa)) constitute a Peptidase S8 domain. Residue D139 is the Charge relay system of the active site. Residue N170 is glycosylated (N-linked (GlcNAc...) asparagine). The active-site Charge relay system is H194. N-linked (GlcNAc...) asparagine glycans are attached at residues N217, N360, N416, and N433. In terms of domain architecture, PA spans 350–411 (KYPLVYGDNF…LLPPDDFDSL (62 aa)). S495 (charge relay system) is an active-site residue. N-linked (GlcNAc...) asparagine glycosylation is found at N577, N615, and N633.

This sequence belongs to the peptidase S8 family. Post-translationally, the C-terminal propeptide is autocleaved.

It localises to the secreted. The chain is Subtilisin-like protease SBT4.7 from Arabidopsis thaliana (Mouse-ear cress).